The chain runs to 289 residues: Cbb3-type cytochrome c oxidase subunit FixP (289 aa).

At 1 to 33 (MADKHKHVDEVSGVETTGHEWDGIRELNNPMPR) the chain is on the cytoplasmic side. Residues 34–56 (WWVYSFYATIIWAIGYAIAYPSW) form a helical membrane-spanning segment. Over 57 to 289 (PMLTEATKGM…VFVHSLGGGE (233 aa)) the chain is Periplasmic. Cytochrome c domains follow at residues 110-198 (FAVS…VSLT) and 205-286 (HLVQ…HSLG). Heme c is bound by residues Cys123, Cys126, His127, Met175, Cys218, Cys221, His222, and Met263.

The protein belongs to the CcoP / FixP family. Component of the cbb3-type cytochrome c oxidase at least composed of FixN, FixO, FixQ and FixP. Requires heme c as cofactor.

The protein localises to the cell inner membrane. Its pathway is energy metabolism; oxidative phosphorylation. In terms of biological role, C-type cytochrome. Part of the cbb3-type cytochrome c oxidase complex. FixP subunit is required for transferring electrons from donor cytochrome c via its heme groups to FixO subunit. From there, electrons are shuttled to the catalytic binuclear center of FixN subunit where oxygen reduction takes place. The complex also functions as a proton pump. The polypeptide is Cbb3-type cytochrome c oxidase subunit FixP (Rhizobium meliloti (strain 1021) (Ensifer meliloti)).